We begin with the raw amino-acid sequence, 492 residues long: 2-succinylbenzoate--CoA ligase (492 aa).

Belongs to the ATP-dependent AMP-binding enzyme family. MenE subfamily.

The enzyme catalyses 2-succinylbenzoate + ATP + CoA = 2-succinylbenzoyl-CoA + AMP + diphosphate. The protein operates within quinol/quinone metabolism; 1,4-dihydroxy-2-naphthoate biosynthesis; 1,4-dihydroxy-2-naphthoate from chorismate: step 5/7. It participates in quinol/quinone metabolism; menaquinone biosynthesis. Converts 2-succinylbenzoate (OSB) to 2-succinylbenzoyl-CoA (OSB-CoA). The polypeptide is 2-succinylbenzoate--CoA ligase (Staphylococcus aureus (strain Mu3 / ATCC 700698)).